The sequence spans 317 residues: 4-hydroxy-3-methylbut-2-enyl diphosphate reductase (317 aa).

A [4Fe-4S] cluster-binding site is contributed by cysteine 12. The (2E)-4-hydroxy-3-methylbut-2-enyl diphosphate site is built by histidine 41 and histidine 74. Positions 41 and 74 each coordinate dimethylallyl diphosphate. Isopentenyl diphosphate contacts are provided by histidine 41 and histidine 74. Cysteine 97 is a [4Fe-4S] cluster binding site. Position 125 (histidine 125) interacts with (2E)-4-hydroxy-3-methylbut-2-enyl diphosphate. Residue histidine 125 coordinates dimethylallyl diphosphate. Isopentenyl diphosphate is bound at residue histidine 125. Residue glutamate 127 is the Proton donor of the active site. Threonine 168 provides a ligand contact to (2E)-4-hydroxy-3-methylbut-2-enyl diphosphate. Cysteine 198 provides a ligand contact to [4Fe-4S] cluster. The (2E)-4-hydroxy-3-methylbut-2-enyl diphosphate site is built by serine 226, serine 227, asparagine 228, and serine 270. Serine 226, serine 227, asparagine 228, and serine 270 together coordinate dimethylallyl diphosphate. Serine 226, serine 227, asparagine 228, and serine 270 together coordinate isopentenyl diphosphate.

Belongs to the IspH family. As to quaternary structure, homodimer. [4Fe-4S] cluster serves as cofactor.

It carries out the reaction isopentenyl diphosphate + 2 oxidized [2Fe-2S]-[ferredoxin] + H2O = (2E)-4-hydroxy-3-methylbut-2-enyl diphosphate + 2 reduced [2Fe-2S]-[ferredoxin] + 2 H(+). It catalyses the reaction dimethylallyl diphosphate + 2 oxidized [2Fe-2S]-[ferredoxin] + H2O = (2E)-4-hydroxy-3-methylbut-2-enyl diphosphate + 2 reduced [2Fe-2S]-[ferredoxin] + 2 H(+). It functions in the pathway isoprenoid biosynthesis; dimethylallyl diphosphate biosynthesis; dimethylallyl diphosphate from (2E)-4-hydroxy-3-methylbutenyl diphosphate: step 1/1. It participates in isoprenoid biosynthesis; isopentenyl diphosphate biosynthesis via DXP pathway; isopentenyl diphosphate from 1-deoxy-D-xylulose 5-phosphate: step 6/6. In terms of biological role, catalyzes the conversion of 1-hydroxy-2-methyl-2-(E)-butenyl 4-diphosphate (HMBPP) into a mixture of isopentenyl diphosphate (IPP) and dimethylallyl diphosphate (DMAPP). Acts in the terminal step of the DOXP/MEP pathway for isoprenoid precursor biosynthesis. This chain is 4-hydroxy-3-methylbut-2-enyl diphosphate reductase, found in Proteus mirabilis (strain HI4320).